Consider the following 84-residue polypeptide: Kappa-scoloptoxin(11)-Ssm3a (84 aa).

The signal sequence occupies residues 1–16; that stretch reads MSWMFYSFIVFTLAIK.

The protein belongs to the scoloptoxin-11 family. In terms of processing, contains 2 disulfide bonds. In terms of tissue distribution, expressed by the venom gland.

The protein localises to the secreted. Its function is as follows. Inhibits voltage-gated potassium channel currents in DRG neurons. 200 nM of the toxin inhibits current amplitude by only 25% and even at concentrations up to 5 uM, the toxin does not inhibit all potassium currents. In vivo, insects injected with this toxin showed signs of neurotoxicity including twitching, paralysis, and body contraction. In Scolopendra mutilans (Chinese red-headed centipede), this protein is Kappa-scoloptoxin(11)-Ssm3a.